Here is a 300-residue protein sequence, read N- to C-terminus: Protoheme IX farnesyltransferase 1 (300 aa).

9 helical membrane passes run 28–48, 54–74, 100–120, 122–142, 149–169, 176–196, 222–242, 243–263, and 280–300; these read VVAL…PTIL, VAGL…NHLI, ALLF…VFTN, LTAW…TAYL, NIVI…TAVT, ALLL…ALAI, CILL…LVGM, SGPL…YKAW, and FSIY…YLWA.

Belongs to the UbiA prenyltransferase family. Protoheme IX farnesyltransferase subfamily.

The protein resides in the cell inner membrane. The catalysed reaction is heme b + (2E,6E)-farnesyl diphosphate + H2O = Fe(II)-heme o + diphosphate. It functions in the pathway porphyrin-containing compound metabolism; heme O biosynthesis; heme O from protoheme: step 1/1. Functionally, converts heme B (protoheme IX) to heme O by substitution of the vinyl group on carbon 2 of heme B porphyrin ring with a hydroxyethyl farnesyl side group. The sequence is that of Protoheme IX farnesyltransferase 1 from Shewanella sp. (strain ANA-3).